The chain runs to 431 residues: COBRA-like protein 4 (431 aa).

Positions 1–20 (MRLLFSFCFFFFMIIFTATA) are cleaved as a signal peptide. N-linked (GlcNAc...) asparagine glycosylation is found at Asn-29, Asn-154, Asn-162, Asn-201, Asn-226, Asn-306, Asn-321, and Asn-340. Asn-414 carries the GPI-anchor amidated asparagine lipid modification. The propeptide at 415 to 431 (FASFSLTILLLLFISIW) is removed in mature form.

It belongs to the COBRA family. As to expression, expressed in roots, stems, leaves, flowers and siliques.

It is found in the cell membrane. The sequence is that of COBRA-like protein 4 (COBL4) from Arabidopsis thaliana (Mouse-ear cress).